Here is a 282-residue protein sequence, read N- to C-terminus: Pantothenate synthetase (282 aa).

Residue 30 to 37 (MGYLHEGH) participates in ATP binding. The active-site Proton donor is His-37. Gln-61 serves as a coordination point for (R)-pantoate. Gln-61 lines the beta-alanine pocket. 147–150 (GQKD) is an ATP binding site. Gln-153 contacts (R)-pantoate. Residues Val-176 and 184 to 187 (LSSR) each bind ATP.

Belongs to the pantothenate synthetase family. As to quaternary structure, homodimer.

It is found in the cytoplasm. The catalysed reaction is (R)-pantoate + beta-alanine + ATP = (R)-pantothenate + AMP + diphosphate + H(+). Its pathway is cofactor biosynthesis; (R)-pantothenate biosynthesis; (R)-pantothenate from (R)-pantoate and beta-alanine: step 1/1. Its function is as follows. Catalyzes the condensation of pantoate with beta-alanine in an ATP-dependent reaction via a pantoyl-adenylate intermediate. The chain is Pantothenate synthetase from Desulfitobacterium hafniense (strain DSM 10664 / DCB-2).